The following is a 123-amino-acid chain: Ribosome-binding factor A (123 aa).

This sequence belongs to the RbfA family. As to quaternary structure, monomer. Binds 30S ribosomal subunits, but not 50S ribosomal subunits or 70S ribosomes.

The protein resides in the cytoplasm. One of several proteins that assist in the late maturation steps of the functional core of the 30S ribosomal subunit. Associates with free 30S ribosomal subunits (but not with 30S subunits that are part of 70S ribosomes or polysomes). Required for efficient processing of 16S rRNA. May interact with the 5'-terminal helix region of 16S rRNA. This Desulfatibacillum aliphaticivorans protein is Ribosome-binding factor A.